We begin with the raw amino-acid sequence, 297 residues long: Transcription factor MYB1R1 (297 aa).

The segment at 44-96 is disordered; it reads DLSQYEHPNANNNNNGGDNNESSKVAQDEGYASADDAVQHQSNSGRERKRGVP. Positions 52 to 63 are enriched in low complexity; it reads NANNNNNGGDNN. The region spanning 89–145 is the HTH myb-type domain; the sequence is RERKRGVPWTEEEHKLFLLGLQKVGKGDWRGISRNFVKTRTPTQVASHAQKYFLRRS. The H-T-H motif DNA-binding region spans 117–141; it reads WRGISRNFVKTRTPTQVASHAQKYF.

It localises to the nucleus. It is found in the cytoplasm. The protein resides in the cytosol. In terms of biological role, binds selectively to the DNA sequence 5'-[GA]GATAA-3' and may act as a transcription factor involved in the regulation of drought-responsive genes. Enhances stomatal closure in response to abscisic acid (ABA). Confers drought and salt tolerance. This Solanum tuberosum (Potato) protein is Transcription factor MYB1R1.